Consider the following 1111-residue polypeptide: Isoleucine--tRNA ligase (1111 aa).

The short motif at 52 to 62 is the 'HIGH' region element; that stretch reads PFANGLPHYGH. The 'KMSKS' region signature appears at 645 to 649; sequence KLSKR. An ATP-binding site is contributed by lysine 648.

The protein belongs to the class-I aminoacyl-tRNA synthetase family. IleS type 2 subfamily. In terms of assembly, monomer. Zn(2+) serves as cofactor.

It is found in the cytoplasm. The catalysed reaction is tRNA(Ile) + L-isoleucine + ATP = L-isoleucyl-tRNA(Ile) + AMP + diphosphate. Functionally, catalyzes the attachment of isoleucine to tRNA(Ile). As IleRS can inadvertently accommodate and process structurally similar amino acids such as valine, to avoid such errors it has two additional distinct tRNA(Ile)-dependent editing activities. One activity is designated as 'pretransfer' editing and involves the hydrolysis of activated Val-AMP. The other activity is designated 'posttransfer' editing and involves deacylation of mischarged Val-tRNA(Ile). This is Isoleucine--tRNA ligase from Wolbachia pipientis wMel.